We begin with the raw amino-acid sequence, 470 residues long: Dendritic cell-specific transmembrane protein (470 aa).

The Cytoplasmic portion of the chain corresponds to 1-33 (MRLWTLGTSIFLRLWGTYVFPRSPSWLDFIQHL). The chain crosses the membrane as a helical span at residues 34–54 (GVCCFVAFLSVSLFSAAFYWI). Position 55 (Leu-55) is a topological domain, extracellular. The helical transmembrane segment at 56–76 (PPVALLSSVWMITCVFLCCSK) threads the bilayer. The Cytoplasmic segment spans residues 77–97 (RARCFILLAVLSCGLREGRNA). A helical transmembrane segment spans residues 98 to 118 (LIAAGTGVVIFGHVENIFYNF). Residues 119–209 (RGLLDSMTCN…MVVTTELLTS (91 aa)) lie on the Extracellular side of the membrane. The chain crosses the membrane as a helical span at residues 210–230 (VGQKLLALAGLLLILVSTGLF). Topologically, residues 231-292 (LKRFLGPCGW…LQLTPKEKKT (62 aa)) are cytoplasmic. The chain crosses the membrane as a helical span at residues 293–313 (LGLFFLPVLTYLYMWVLFAAV). The Extracellular portion of the chain corresponds to 314–376 (DYLLYRLISS…PKPRLSVSET (63 aa)). The helical transmembrane segment at 377-397 (WVPLSIILLTLIILGLLSSML) threads the bilayer. The Cytoplasmic portion of the chain corresponds to 398–470 (MQLKILVSVS…QTIPANEDDL (73 aa)).

In terms of assembly, interacts with CREB3. Monomer. Homodimer. Isoform 1 interacts (via the C-terminus cytoplasmic tail) with OS9 isoform 1 (via the C-terminus tail); the interaction induces DCSTAMP redistribution to the endoplasmic reticulum-Golgi intermediate compartment. Isoform 1 interacts (via the C-terminus cytoplasmic tail) with OS9 isoform 2 (via the C-terminus tail). In terms of processing, glycosylated. As to expression, expressed in macrophages and bone marrow dendritic cells (BM-DC). Weakly expressed in the spleen and lymph node. Highly expressed in multi-nuclear osteoclasts compared to mono-nuclear macrophages. Expressed in foreign body giant cells (FBGCs). Isoform 1 and isoform 2 are expressed in osteoclasts.

It localises to the cell membrane. Its subcellular location is the endoplasmic reticulum membrane. It is found in the endoplasmic reticulum-Golgi intermediate compartment membrane. The protein resides in the endosome. Functionally, probable cell surface receptor that plays several roles in cellular fusion, cell differentiation, bone and immune homeostasis. Plays a role in TNFSF11-mediated osteoclastogenesis. Cooperates with OCSTAMP in modulating cell-cell fusion in both osteoclasts and foreign body giant cells (FBGCs). Participates in osteoclast bone resorption. Involved in inducing the expression of tartrate-resistant acid phosphatase in osteoclast precursors. Plays a role in haematopoietic stem cell differentiation of bone marrow cells toward the myeloid lineage. Inhibits the development of neutrophilic granulocytes. Plays also a role in the regulation of dendritic cell (DC) antigen presentation activity by controlling phagocytic activity. Involved in the maintenance of immune self-tolerance and avoidance of autoimmune reactions. This chain is Dendritic cell-specific transmembrane protein (Dcstamp), found in Mus musculus (Mouse).